The following is a 390-amino-acid chain: Flagellar P-ring protein (390 aa).

The N-terminal stretch at 1-36 (MFFSRKIRSLLLTPKRRWSLILTLCLIFTGINFSTS) is a signal peptide.

The protein belongs to the FlgI family. In terms of assembly, the basal body constitutes a major portion of the flagellar organelle and consists of four rings (L,P,S, and M) mounted on a central rod.

It is found in the periplasm. It localises to the bacterial flagellum basal body. Functionally, assembles around the rod to form the L-ring and probably protects the motor/basal body from shearing forces during rotation. The chain is Flagellar P-ring protein from Desulfotalea psychrophila (strain LSv54 / DSM 12343).